A 249-amino-acid polypeptide reads, in one-letter code: Secretion system apparatus lipoprotein SsaJ (249 aa).

A signal peptide spans 1 to 18 (MKVHRIVFLTVLTFFLTA). C19 carries the N-palmitoyl cysteine lipid modification. The S-diacylglycerol cysteine moiety is linked to residue C19. A helical membrane pass occupies residues 225–245 (LMLSLTGLLLGVGILIGYFCL).

This sequence belongs to the YscJ lipoprotein family.

The protein resides in the cell outer membrane. In terms of biological role, component of Salmonella pathogenicity island 2 (SPI-2) type III secretion system, required for secretion of some type III-secreted effectors including the SpvB exotoxin. The chain is Secretion system apparatus lipoprotein SsaJ (ssaJ) from Salmonella typhimurium (strain 14028s / SGSC 2262).